Reading from the N-terminus, the 306-residue chain is Isoaspartyl peptidase/L-asparaginase (306 aa).

Catalysis depends on threonine 174, which acts as the Nucleophile. Substrate-binding positions include 202–205 (RIGD) and 224–227 (TGKG).

Belongs to the Ntn-hydrolase family. As to quaternary structure, heterotetramer of two alpha and two beta chains arranged as a dimer of alpha/beta heterodimers. Post-translationally, cleaved into an alpha and beta chain by autocatalysis; this activates the enzyme. The N-terminal residue of the beta subunit is responsible for the nucleophile hydrolase activity. In terms of tissue distribution, developing seeds.

The enzyme catalyses Cleavage of a beta-linked Asp residue from the N-terminus of a polypeptide.. Functionally, degrades proteins damaged by L-isoaspartyl residue formation (also known as beta-Asp residues). Also has L-asparaginase activity, which is used to liberate stored nitrogen during seed development. The protein is Isoaspartyl peptidase/L-asparaginase of Lupinus arboreus (Tree lupine).